A 291-amino-acid polypeptide reads, in one-letter code: Putative butyrophilin-like protein 10 pseudogene (291 aa).

Residues 1-26 (MAVTCDPEAFLSICFVTLVFLQLPLA) form the signal peptide. In terms of domain architecture, Ig-like V-type spans 27 to 146 (SIWKADFDVT…GEATVQVQVA (120 aa)). Over 27–254 (SIWKADFDVT…RSSQFTAWKA (228 aa)) the chain is Extracellular. Cys-54 and Cys-128 are oxidised to a cystine. Residue Asn-59 is glycosylated (N-linked (GlcNAc...) asparagine). Residues 255 to 275 (ALPLILVAMGLVIAGGICIFW) form a helical membrane-spanning segment. The Cytoplasmic segment spans residues 276 to 291 (KRQREKNKASLEEERE).

This sequence belongs to the immunoglobulin superfamily. BTN/MOG family.

Its subcellular location is the membrane. This is Putative butyrophilin-like protein 10 pseudogene from Homo sapiens (Human).